A 402-amino-acid chain; its full sequence is Probable 2,3-bisphosphoglycerate-independent phosphoglycerate mutase (402 aa).

This sequence belongs to the BPG-independent phosphoglycerate mutase family. A-PGAM subfamily.

It carries out the reaction (2R)-2-phosphoglycerate = (2R)-3-phosphoglycerate. It participates in carbohydrate degradation; glycolysis; pyruvate from D-glyceraldehyde 3-phosphate: step 3/5. Catalyzes the interconversion of 2-phosphoglycerate and 3-phosphoglycerate. The protein is Probable 2,3-bisphosphoglycerate-independent phosphoglycerate mutase of Thermosipho melanesiensis (strain DSM 12029 / CIP 104789 / BI429).